The sequence spans 1574 residues: Myosin-2 (1574 aa).

Residue Ser2 is modified to N-acetylserine. Residues 4–57 enclose the Myosin N-terminal SH3-like domain; it reads EVGTRCWYPHKELGWIGAEVIKNEFNDGKYHLELQLEDDEIVSVDTKDLNNDKD. Residues 70-781 enclose the Myosin motor domain; the sequence is EATEDLTSLS…MLAYLEKLRS (712 aa). 164–171 is an ATP binding site; sequence GESGAGKT. The interval 443 to 523 is actin-binding; it reads FIGVLDIYGF…LGILSLLDEE (81 aa). 6 IQ domains span residues 784 to 806, 807 to 831, 832 to 855, 856 to 879, 880 to 902, and 903 to 932; these read MHNS…QYLQ, ISQA…NDEM, KVNC…VFSV, LRTI…KQEH, EYNA…RFLR, and TKKD…DAKS. Residues 933 to 1088 adopt a coiled-coil conformation; that stretch reads VNHLKEVSYK…RLQTAMSLGT (156 aa). Positions 1087–1574 are non alpha-helical, tail domain; the sequence is GTVTTSVLPQ…VAQQVVQDGH (488 aa). A Phosphothreonine modification is found at Thr1097. A Phosphoserine modification is found at Ser1121. A Dilute domain is found at 1226 to 1501; the sequence is AQVLTTIQKV…LRYVADIVKK (276 aa).

Belongs to the TRAFAC class myosin-kinesin ATPase superfamily. Myosin family. Homodimer. Interacts with calmodulin (CMD1) and the myosin light chain MLC1 through its IQ repeats. Binds to the membrane receptors SEC4 and VAC17 to transport secretory vesicles and the vacuole, respectively. Binds to KAR9, which transports BIM1-coated cytoplasmic microtubules that are attached to the spindle pole body into the emerging bud, thereby correctly orienting the mitotic spindle. Interacts with YPT11 and MMR1 to accelerate mitochondrial distribution to the bud. Interacts with SHE4 and localizes it to the bud tip. Interacts with RHO3 and SMY1, putative regulators of MYO2 function. Interacts with SRO7.

It localises to the bud neck. Its subcellular location is the bud tip. Its function is as follows. Myosin heavy chain that is required for the cell cycle-regulated transport of various organelles and proteins for their segregation. Functions by binding with its tail domain to receptor proteins on organelles and exerting force with its N-terminal motor domain against actin filaments, thereby transporting its cargo along polarized actin cables. Essential for the delivery of secretory vesicles to sites of active growth during bud emergence and cytokinesis. Required for segregation and inheritance of peroxisomes, late Golgi compartments, mitochondria and the vacuole to the daughter cell during cell division. Also required for correct alignment of the spindle during mitosis. This is Myosin-2 (MYO2) from Saccharomyces cerevisiae (strain ATCC 204508 / S288c) (Baker's yeast).